The sequence spans 61 residues: Phosphoenolpyruvate synthase (61 aa).

This sequence belongs to the PEP-utilizing enzyme family. Requires Mg(2+) as cofactor.

It carries out the reaction pyruvate + ATP + H2O = phosphoenolpyruvate + AMP + phosphate + 2 H(+). Its pathway is carbohydrate biosynthesis; gluconeogenesis. Its function is as follows. Catalyzes the phosphorylation of pyruvate to phosphoenolpyruvate. This chain is Phosphoenolpyruvate synthase (ppsA), found in Enterobacter agglomerans (Erwinia herbicola).